We begin with the raw amino-acid sequence, 160 residues long: MMEQSLIPQTPVLPLTAQRTVKRALTLLDRHLRETGVAFTSTQAARDWLKLKMAGLEREEFMMLYLNQQNQLIAHETLFAGSISSTEVHPREVVKRALYFNAAAVILAHNHPSGDTTPSQADKTITQRLVQALQLVDIRVPDHLIVGGRQIYSFAEHGLL.

Positions 38–160 (AFTSTQAARD…IYSFAEHGLL (123 aa)) constitute an MPN domain. Residues His109, His111, and Asp122 each contribute to the Zn(2+) site. The JAMM motif signature appears at 109–122 (HNHPSGDTTPSQAD).

Belongs to the UPF0758 family.

The sequence is that of UPF0758 protein YfjY (yfjY) from Escherichia coli (strain K12).